We begin with the raw amino-acid sequence, 149 residues long: Aquaporin-like protein 2 (149 aa).

The interval 1–35 is disordered; sequence MSNESNDLEKNISHLDPTGVDNAYIPPEQPETKHS. Over 1–47 the chain is Cytoplasmic; sequence MSNESNDLEKNISHLDPTGVDNAYIPPEQPETKHSRFNIDRDTLRNH. The chain crosses the membrane as a helical span at residues 48–68; sequence FIAAVGEFCGTFMFLWCAYVI. Topologically, residues 69–89 are extracellular; that stretch reads CNVANHDVALTTEPEGSHPGQ. The chain crosses the membrane as a helical span at residues 90-110; the sequence is LIMIALGFGFSVMFSIWCFWW. Topologically, residues 111–149 are cytoplasmic; sequence GFEPSRFSLFVFGQSHLTSQMCSDVVSSDHCWDGCWWCR.

It belongs to the MIP/aquaporin (TC 1.A.8) family.

The protein resides in the endoplasmic reticulum membrane. Its subcellular location is the cell membrane. Functionally, water channel required to facilitate the transport of water across membranes. Involved in freeze tolerance, osmotolerance and cell flocculation in liquid cultures. Is non-functional in most laboratory strains. The protein is Aquaporin-like protein 2 (AQY2-2) of Saccharomyces cerevisiae (strain JAY291) (Baker's yeast).